We begin with the raw amino-acid sequence, 586 residues long: uncharacterized protein (586 aa).

Disordered regions lie at residues V17–E64 and H80–N123. The segment covering P28–T37 has biased composition (polar residues). Low complexity-rich tracts occupy residues S38–S52 and H80–S91. Residues Q94–I110 show a composition bias toward basic and acidic residues. Positions M112–N123 are enriched in gly residues. 12 helical membrane passes run W151–Y171, W191–L211, L218–T238, F243–I263, L283–V303, T317–F337, F375–L395, Y413–L433, L441–I461, M466–I486, I513–T533, and I536–L556.

This sequence belongs to the major facilitator superfamily. Feline leukemia virus subgroup C receptor (TC 2.A.1.28.1) family.

Its subcellular location is the membrane. This is an uncharacterized protein from Caenorhabditis elegans.